Consider the following 244-residue polypeptide: Osmotin-like protein OSM34 (244 aa).

A signal peptide spans 1-22; it reads MANLLVSTFIFSALLLISTATA. 8 disulfides stabilise this stretch: cysteine 31–cysteine 222, cysteine 72–cysteine 82, cysteine 87–cysteine 93, cysteine 138–cysteine 212, cysteine 143–cysteine 195, cysteine 151–cysteine 161, cysteine 165–cysteine 174, and cysteine 175–cysteine 182.

This sequence belongs to the thaumatin family.

This chain is Osmotin-like protein OSM34 (OSM34), found in Arabidopsis thaliana (Mouse-ear cress).